We begin with the raw amino-acid sequence, 272 residues long: Undecaprenyl-diphosphatase (272 aa).

Helical transmembrane passes span 6–26, 45–65, 92–112, 115–135, 189–209, 221–241, and 251–271; these read SLLIAFILGVVEGLTEFLPVS, AKTFEVIIQLGSILAVVVMFW, THILLAMIPAVVLGLIFHDVI, LFYPQNVMYSLVIGGFLLLAA, YAASEFSFILAVPMMMGATVL, ADVPMFAVGFVTAFVVALIAI, and ISFIPFAIYRFIVAGVVYMVF.

The protein belongs to the UppP family.

It localises to the cell inner membrane. The enzyme catalyses di-trans,octa-cis-undecaprenyl diphosphate + H2O = di-trans,octa-cis-undecaprenyl phosphate + phosphate + H(+). Its function is as follows. Catalyzes the dephosphorylation of undecaprenyl diphosphate (UPP). Confers resistance to bacitracin. This Pectobacterium atrosepticum (strain SCRI 1043 / ATCC BAA-672) (Erwinia carotovora subsp. atroseptica) protein is Undecaprenyl-diphosphatase.